The following is a 2437-amino-acid chain: Neurogenic locus notch homolog protein 1 (2437 aa).

The first 20 residues, 1–20 (MNRFLVKLTLLTAASLATVA), serve as a signal peptide directing secretion. 4 EGF-like domains span residues 21–57 (QGQR…AQCQ), 58–98 (FPNP…RLCL), 101–138 (VNHA…KTCQ), and 139–175 (LADP…QTCR). Residues 21-1726 (QGQRCSEYCQ…GGPPKTGEMY (1706 aa)) are Extracellular-facing. 111 disulfide bridges follow: Cys-25/Cys-35, Cys-29/Cys-45, Cys-47/Cys-56, Cys-62/Cys-73, Cys-67/Cys-86, Cys-88/Cys-97, Cys-105/Cys-116, Cys-110/Cys-126, Cys-128/Cys-137, Cys-143/Cys-154, Cys-148/Cys-163, Cys-165/Cys-174, Cys-181/Cys-194, Cys-188/Cys-203, Cys-205/Cys-214, Cys-221/Cys-232, Cys-226/Cys-242, Cys-244/Cys-253, Cys-260/Cys-271, Cys-265/Cys-280, Cys-282/Cys-291, Cys-298/Cys-311, Cys-305/Cys-320, Cys-322/Cys-331, Cys-338/Cys-349, Cys-343/Cys-358, Cys-360/Cys-369, Cys-375/Cys-386, Cys-380/Cys-397, Cys-399/Cys-408, Cys-415/Cys-428, Cys-422/Cys-437, Cys-439/Cys-448, Cys-455/Cys-466, Cys-460/Cys-475, Cys-477/Cys-486, Cys-493/Cys-503, Cys-498/Cys-512, Cys-514/Cys-523, Cys-530/Cys-541, Cys-535/Cys-550, Cys-552/Cys-561, Cys-568/Cys-578, Cys-573/Cys-587, Cys-589/Cys-598, Cys-605/Cys-616, Cys-610/Cys-625, Cys-627/Cys-636, Cys-643/Cys-653, Cys-648/Cys-662, Cys-664/Cys-673, Cys-680/Cys-691, Cys-685/Cys-700, Cys-702/Cys-711, Cys-718/Cys-728, Cys-723/Cys-737, Cys-739/Cys-748, Cys-755/Cys-766, Cys-760/Cys-775, Cys-777/Cys-786, Cys-793/Cys-804, Cys-798/Cys-813, Cys-815/Cys-824, Cys-831/Cys-842, Cys-836/Cys-853, Cys-855/Cys-864, Cys-871/Cys-882, Cys-876/Cys-891, Cys-893/Cys-902, Cys-909/Cys-920, Cys-914/Cys-929, Cys-931/Cys-940, Cys-947/Cys-958, Cys-952/Cys-967, Cys-969/Cys-978, Cys-985/Cys-996, Cys-990/Cys-1005, Cys-1007/Cys-1016, Cys-1023/Cys-1034, Cys-1028/Cys-1043, Cys-1045/Cys-1054, Cys-1061/Cys-1072, Cys-1066/Cys-1081, Cys-1083/Cys-1092, Cys-1099/Cys-1120, Cys-1114/Cys-1129, Cys-1131/Cys-1140, Cys-1147/Cys-1158, Cys-1152/Cys-1167, Cys-1169/Cys-1178, Cys-1185/Cys-1196, Cys-1190/Cys-1205, Cys-1207/Cys-1216, Cys-1223/Cys-1242, Cys-1236/Cys-1251, Cys-1253/Cys-1262, Cys-1269/Cys-1282, Cys-1274/Cys-1291, Cys-1293/Cys-1302, Cys-1309/Cys-1320, Cys-1314/Cys-1332, Cys-1334/Cys-1343, Cys-1350/Cys-1361, Cys-1355/Cys-1370, Cys-1372/Cys-1381, Cys-1389/Cys-1400, Cys-1394/Cys-1411, Cys-1413/Cys-1422, Cys-1447/Cys-1470, Cys-1452/Cys-1465, and Cys-1461/Cys-1477. The region spanning 177 to 215 (DVNECAVSPSPCRNGGTCINEVGSYLCRCPPEYTGPHCQ) is the EGF-like 5; calcium-binding domain. The region spanning 217–254 (LYQPCLPSPCRSGGTCVQTSDTTHTCSCLPGFTGQTCE) is the EGF-like 6 domain. Thr-231 carries O-linked (Fuc...) threonine; alternate glycosylation. Residue Thr-231 is glycosylated (O-linked (GalNAc...) threonine; alternate). The region spanning 256 to 292 (NVDDCTQHACENGGPCIDGINTYNCHCDKHWTGQYCT) is the EGF-like 7; calcium-binding domain. Residues 294 to 332 (DVDECELSPNACQNGGTCHNTIGGFHCVCVNGWTGDDCS) form the EGF-like 8; calcium-binding domain. The EGF-like 9; calcium-binding domain occupies 334–370 (NIDDCASAACSHGATCHDRVASFFCECPHGRTGLLCH). Positions 371 to 409 (LDDACISNPCQKGSNCDTNPVSGKAICTCPPGYTGSACN) constitute an EGF-like 10 domain. The 39-residue stretch at 411–449 (DIDECSLGANPCEHGGRCLNTKGSFQCKCLQGYEGPRCE) folds into the EGF-like 11; calcium-binding domain. Positions 451–487 (DVNECKSNPCQNDATCLDQIGGFHCICMPGYEGVFCQ) constitute an EGF-like 12; calcium-binding domain. One can recognise an EGF-like 13; calcium-binding domain in the interval 489–524 (NSDDCASQPCLNGKCIDKINSFHCECPKGFSGSLCQ). One can recognise an EGF-like 14; calcium-binding domain in the interval 526–562 (DVDECASTPCKNGAKCTDGPNKYTCECTPGFSGIHCE). Residues 564-599 (DINECASSPCHYGVCRDGVASFTCDCRPGYTGRLCE) form the EGF-like 15; calcium-binding domain. Residues 601-637 (NINECLSQPCRNGGTCQDRENAYICTCPKGTTGVNCE) enclose the EGF-like 16; calcium-binding domain. The 36-residue stretch at 639-674 (NIDDCKRKPCDYGKCIDKINGYECVCEPGYSGSMCN) folds into the EGF-like 17; calcium-binding domain. The 37-residue stretch at 676-712 (NIDDCALNPCHNGGTCIDGVNSFTCLCPDGFRDATCL) folds into the EGF-like 18; calcium-binding domain. One can recognise an EGF-like 19; calcium-binding domain in the interval 714 to 749 (QHNECSSNPCIHGSCLDQINSYRCVCEAGWMGRNCD). In terms of domain architecture, EGF-like 20; calcium-binding spans 751–787 (NINECLSNPCVNGGTCKDMTSGYLCTCRAGFSGPNCQ). The EGF-like 21; calcium-binding domain maps to 789-825 (NINECASNPCLNQGSCIDDVAGFKCNCMLPYTGEVCE). Positions 827–865 (VLAPCSPRPCKNGGVCRESEDFQSFSCNCPAGWQGQTCE) constitute an EGF-like 22 domain. The EGF-like 23; calcium-binding domain occupies 867 to 903 (DINECVRNPCTNGGVCENLRGGFQCRCNPGFTGALCE). An EGF-like 24; calcium-binding domain is found at 905-941 (DIDDCEPNPCSNGGVCQDRVNGFVCVCLAGFRGERCA). The EGF-like 25; calcium-binding domain maps to 943–979 (DIDECVSAPCRNGGNCTDCVNSYTCSCPAGFSGINCE). Asn-957 carries an N-linked (GlcNAc...) asparagine glycan. Residues 981 to 1017 (NTPDCTESSCFNGGTCVDGISSFSCVCLPGFTGNYCQ) form the EGF-like 26 domain. In terms of domain architecture, EGF-like 27; calcium-binding spans 1019-1055 (DVNECDSRPCQNGGSCQDGYGTYKCTCPHGYTGLNCQ). 2 EGF-like domains span residues 1057 to 1093 (LVRW…IYCD) and 1095 to 1141 (PSVS…SYCQ). The region spanning 1143–1179 (QVDECQPNPCQNGATCTDYLGGYSCECVPGYHGMNCS) is the EGF-like 30; calcium-binding domain. An N-linked (GlcNAc...) asparagine glycan is attached at Asn-1177. Residues 1181–1217 (EINECLSQPCQNGGTCIDLVNTYKCSCPRGTQGVHCE) enclose the EGF-like 31; calcium-binding domain. An EGF-like 32; calcium-binding domain is found at 1219 to 1263 (DIDDCSPSVDPLTGEPRCFNGGRCVDRVGGYGCVCPAGFVGERCE). EGF-like domains are found at residues 1265–1303 (DVNE…KRCE), 1305–1344 (VFNG…SSCE), 1346–1382 (DSQS…HECQ), and 1385–1423 (MDSP…LLCH). O-linked (Fuc...) threonine; alternate glycosylation is present at Thr-1399. A glycan (O-linked (GalNAc...) threonine; alternate) is linked at Thr-1399. 3 LNR repeats span residues 1447 to 1487 (CEIA…PWQN), 1488 to 1525 (CSAA…LEGQ), and 1526 to 1566 (CNPL…VPQK). The N-linked (GlcNAc...) asparagine glycan is linked to Asn-1487. 6 disulfide bridges follow: Cys-1488-Cys-1512, Cys-1494-Cys-1507, Cys-1503-Cys-1519, Cys-1526-Cys-1552, Cys-1534-Cys-1547, and Cys-1543-Cys-1559. N-linked (GlcNAc...) asparagine glycosylation is present at Asn-1585. A helical transmembrane segment spans residues 1727-1747 (PMFLVLLALAVLALAAVGVVV). The Cytoplasmic portion of the chain corresponds to 1748-2437 (SRKRKREHGQ…QMNHIPEAFK (690 aa)). The tract at residues 1770 to 1790 (KKKRREPVGEDSVGLKPLKNS) is disordered. ANK repeat units follow at residues 1867–1910 (DGFT…NLHN), 1915–1944 (TGET…DANV), 1948–1978 (MGRT…DLDA), 1982–2011 (DGTT…DPNA), 2015–2044 (SGKS…NKDL), and 2048–2077 (KEET…NRDI). Disordered regions lie at residues 2127–2174 (IKPS…GGIM) and 2356–2437 (RMAP…EAFK). Residues 2356–2387 (RMAPPISSTQFLTPPSQHSYSNPMDNTPNHQQ) are compositionally biased toward polar residues. Low complexity predominate over residues 2396 to 2411 (PSAGSPDQWSSSSPHS). Residues 2412 to 2429 (NLSDWSEGISSPPTSMQM) are compositionally biased toward polar residues.

The protein belongs to the NOTCH family. In terms of processing, synthesized in the endoplasmic reticulum as an inactive form which is proteolytically cleaved by a furin-like convertase in the trans-Golgi network before it reaches the plasma membrane to yield an active, ligand-accessible form. Cleavage results in a C-terminal fragment N(TM) and a N-terminal fragment N(EC). Following ligand binding, it is cleaved by adam17 to yield a membrane-associated intermediate fragment called notch extracellular truncation (NEXT). Following endocytosis, this fragment is then cleaved by presenilin dependent gamma-secretase to release a Notch-derived peptide containing the intracellular domain (NICD) from the membrane. Post-translationally, O-glycosylated on the EGF-like domains. Contains both O-linked fucose and O-linked glucose. O-linked glycosylation by galnt11 is involved in determination of left/right symmetry: glycosylation promotes activation of notch1, possibly by promoting cleavage by adam17, modulating the balance between motile and immotile (sensory) cilia at the left-right organiser (LRO).

The protein resides in the cell membrane. Its subcellular location is the nucleus. Functions as a receptor for membrane-bound ligands Jagged-1 (JAG1), Jagged-2 (JAG2) and Delta-1 (DLL1) to regulate cell-fate determination. Upon ligand activation through the released notch intracellular domain (NICD) it forms a transcriptional activator complex with RBPJ/RBPSUH and activates genes of the enhancer of split locus. Affects the implementation of differentiation, proliferation and apoptotic programs. Involved in angiogenesis; negatively regulates endothelial cell proliferation and migration and angiogenic sprouting. Involved in the maturation of both CD4(+) and CD8(+) cells in the thymus. Important for follicular differentiation and possibly cell fate selection within the follicle. During cerebellar development, functions as a receptor for neuronal DNER and is involved in the differentiation of Bergmann glia. Represses neuronal and myogenic differentiation. May play an essential role in postimplantation development, probably in some aspect of cell specification and/or differentiation. May be involved in mesoderm development, somite formation and neurogenesis. Involved in determination of left/right symmetry by modulating the balance between motile and immotile (sensory) cilia at the left-right organiser (LRO). The polypeptide is Neurogenic locus notch homolog protein 1 (notch1a) (Danio rerio (Zebrafish)).